The primary structure comprises 612 residues: Dihydroxy-acid dehydratase (612 aa).

Asp81 is a Mg(2+) binding site. Cys122 serves as a coordination point for [2Fe-2S] cluster. Asp123 and Lys124 together coordinate Mg(2+). Residue Lys124 is modified to N6-carboxylysine. Cys195 serves as a coordination point for [2Fe-2S] cluster. A Mg(2+)-binding site is contributed by Glu491. Ser517 (proton acceptor) is an active-site residue.

Belongs to the IlvD/Edd family. In terms of assembly, homodimer. The cofactor is [2Fe-2S] cluster. Mg(2+) is required as a cofactor.

It carries out the reaction (2R)-2,3-dihydroxy-3-methylbutanoate = 3-methyl-2-oxobutanoate + H2O. The enzyme catalyses (2R,3R)-2,3-dihydroxy-3-methylpentanoate = (S)-3-methyl-2-oxopentanoate + H2O. It functions in the pathway amino-acid biosynthesis; L-isoleucine biosynthesis; L-isoleucine from 2-oxobutanoate: step 3/4. Its pathway is amino-acid biosynthesis; L-valine biosynthesis; L-valine from pyruvate: step 3/4. Its function is as follows. Functions in the biosynthesis of branched-chain amino acids. Catalyzes the dehydration of (2R,3R)-2,3-dihydroxy-3-methylpentanoate (2,3-dihydroxy-3-methylvalerate) into 2-oxo-3-methylpentanoate (2-oxo-3-methylvalerate) and of (2R)-2,3-dihydroxy-3-methylbutanoate (2,3-dihydroxyisovalerate) into 2-oxo-3-methylbutanoate (2-oxoisovalerate), the penultimate precursor to L-isoleucine and L-valine, respectively. The protein is Dihydroxy-acid dehydratase of Buchnera aphidicola subsp. Baizongia pistaciae (strain Bp).